Reading from the N-terminus, the 902-residue chain is 26S proteasome regulatory subunit rpn-1 (902 aa).

Over residues M1 to E41 the composition is skewed to basic and acidic residues. The tract at residues M1–Q54 is disordered. Acidic residues predominate over residues Q42–D52. 8 PC repeats span residues S415–A448, G449–V487, A488–V522, M525–L559, A568–A601, A645–R680, A681–I715, and N716–S750.

Belongs to the proteasome subunit S2 family.

In terms of biological role, acts as a regulatory subunit of the 26 proteasome which is involved in the ATP-dependent degradation of ubiquitinated proteins. This is 26S proteasome regulatory subunit rpn-1 (rpn-1) from Neurospora crassa (strain ATCC 24698 / 74-OR23-1A / CBS 708.71 / DSM 1257 / FGSC 987).